Consider the following 257-residue polypeptide: Imidazole glycerol phosphate synthase subunit HisF (257 aa).

Active-site residues include D11 and D130.

It belongs to the HisA/HisF family. Heterodimer of HisH and HisF.

The protein resides in the cytoplasm. The enzyme catalyses 5-[(5-phospho-1-deoxy-D-ribulos-1-ylimino)methylamino]-1-(5-phospho-beta-D-ribosyl)imidazole-4-carboxamide + L-glutamine = D-erythro-1-(imidazol-4-yl)glycerol 3-phosphate + 5-amino-1-(5-phospho-beta-D-ribosyl)imidazole-4-carboxamide + L-glutamate + H(+). It participates in amino-acid biosynthesis; L-histidine biosynthesis; L-histidine from 5-phospho-alpha-D-ribose 1-diphosphate: step 5/9. Its function is as follows. IGPS catalyzes the conversion of PRFAR and glutamine to IGP, AICAR and glutamate. The HisF subunit catalyzes the cyclization activity that produces IGP and AICAR from PRFAR using the ammonia provided by the HisH subunit. In Shewanella baltica (strain OS223), this protein is Imidazole glycerol phosphate synthase subunit HisF.